The primary structure comprises 640 residues: Threonine--tRNA ligase (640 aa).

Residues 1-59 form the TGS domain; it reads MKIKVKLPDGKEKEYDRGITPAEIAKELGIKKAIGAVVNGELWDLKRPIENDCELRLVT. Residues 240–531 form a catalytic region; that stretch reads DHRKLGPQLE…LIEHFAGAFP (292 aa). Residues cysteine 332, histidine 383, and histidine 508 each contribute to the Zn(2+) site.

Belongs to the class-II aminoacyl-tRNA synthetase family. Homodimer. The cofactor is Zn(2+).

Its subcellular location is the cytoplasm. It catalyses the reaction tRNA(Thr) + L-threonine + ATP = L-threonyl-tRNA(Thr) + AMP + diphosphate + H(+). In terms of biological role, catalyzes the attachment of threonine to tRNA(Thr) in a two-step reaction: L-threonine is first activated by ATP to form Thr-AMP and then transferred to the acceptor end of tRNA(Thr). Also edits incorrectly charged L-seryl-tRNA(Thr). In Thermotoga maritima (strain ATCC 43589 / DSM 3109 / JCM 10099 / NBRC 100826 / MSB8), this protein is Threonine--tRNA ligase.